The following is a 332-amino-acid chain: Biotin synthase (332 aa).

Residues 53-282 form the Radical SAM core domain; it reads YFGKKVKLNM…SKEIRISGGR (230 aa). Residues cysteine 71, cysteine 75, and cysteine 78 each contribute to the [4Fe-4S] cluster site. 4 residues coordinate [2Fe-2S] cluster: cysteine 115, cysteine 147, cysteine 207, and arginine 277.

It belongs to the radical SAM superfamily. Biotin synthase family. Homodimer. The cofactor is [4Fe-4S] cluster. [2Fe-2S] cluster serves as cofactor.

It catalyses the reaction (4R,5S)-dethiobiotin + (sulfur carrier)-SH + 2 reduced [2Fe-2S]-[ferredoxin] + 2 S-adenosyl-L-methionine = (sulfur carrier)-H + biotin + 2 5'-deoxyadenosine + 2 L-methionine + 2 oxidized [2Fe-2S]-[ferredoxin]. It participates in cofactor biosynthesis; biotin biosynthesis; biotin from 7,8-diaminononanoate: step 2/2. In terms of biological role, catalyzes the conversion of dethiobiotin (DTB) to biotin by the insertion of a sulfur atom into dethiobiotin via a radical-based mechanism. This Bacillus cytotoxicus (strain DSM 22905 / CIP 110041 / 391-98 / NVH 391-98) protein is Biotin synthase.